Here is a 720-residue protein sequence, read N- to C-terminus: Photosystem I P700 chlorophyll a apoprotein A1 (720 aa).

The next 8 membrane-spanning stretches (helical) occupy residues Ile62–Ala85, Leu148–His171, Leu186–Leu210, Ile282–Tyr300, Trp337–Tyr360, Leu376–Val402, Ala424–His446, and Phe522–Leu540. 2 residues coordinate [4Fe-4S] cluster: Cys564 and Cys573. Transmembrane regions (helical) follow at residues His580–Trp601 and Leu655–Phe677. Position 666 (His666) interacts with chlorophyll a'. Chlorophyll a-binding residues include Met674 and Tyr682. Position 683 (Trp683) interacts with phylloquinone. Residues Ala715–His720 form a helical membrane-spanning segment.

The protein belongs to the PsaA/PsaB family. The PsaA/B heterodimer binds the P700 chlorophyll special pair and subsequent electron acceptors. PSI consists of a core antenna complex that captures photons, and an electron transfer chain that converts photonic excitation into a charge separation. The eukaryotic PSI reaction center is composed of at least 11 subunits. P700 is a chlorophyll a/chlorophyll a' dimer, A0 is one or more chlorophyll a, A1 is one or both phylloquinones and FX is a shared 4Fe-4S iron-sulfur center. is required as a cofactor.

It localises to the plastid. Its subcellular location is the chloroplast thylakoid membrane. It carries out the reaction reduced [plastocyanin] + hnu + oxidized [2Fe-2S]-[ferredoxin] = oxidized [plastocyanin] + reduced [2Fe-2S]-[ferredoxin]. Its function is as follows. PsaA and PsaB bind P700, the primary electron donor of photosystem I (PSI), as well as the electron acceptors A0, A1 and FX. PSI is a plastocyanin-ferredoxin oxidoreductase, converting photonic excitation into a charge separation, which transfers an electron from the donor P700 chlorophyll pair to the spectroscopically characterized acceptors A0, A1, FX, FA and FB in turn. Oxidized P700 is reduced on the lumenal side of the thylakoid membrane by plastocyanin. The sequence is that of Photosystem I P700 chlorophyll a apoprotein A1 from Ephedra tweediana (Vining horsetail).